Here is a 288-residue protein sequence, read N- to C-terminus: NADPH-dependent aldehyde reductase 1, chloroplastic (288 aa).

Residues 1–18 (MASEKQKQHAQPGKEHVM) show a composition bias toward basic and acidic residues. Positions 1 to 32 (MASEKQKQHAQPGKEHVMESSPQFSSSDYQPS) are disordered. Residues 20–32 (SSPQFSSSDYQPS) show a composition bias toward polar residues. 47 to 71 (SGIGRAVGYCFASEGATVAFTYVKG) contributes to the NADP(+) binding site. Serine 179 provides a ligand contact to substrate. The Proton acceptor role is filled by tyrosine 192.

It belongs to the short-chain dehydrogenases/reductases (SDR) family.

Its subcellular location is the plastid. The protein resides in the chloroplast. Its function is as follows. Aldehyde reductase that catalyzes the reduction of the aldehyde carbonyl groups on saturated and alpha,beta-unsaturated aldehydes with more than 5 carbons. No activity on alpha,beta-unsaturated ketones. Can use propionaldehyde, butyraldehyde, methylglyoxal, (e)-2-pentenal, (E)-2-hexenal, (Z)-3-hexenal and (E)-2-nonenal as substrates, but not propenal (acrolein), crotonaldehyde, 2-butanone, 3-buten-2-one or 1-penten-3-one. May act as a short alcohol-polyol-sugar dehydrogenase possibly related to carbohydrate metabolism and the acquisition of desiccation tolerance. May also be involved in signal transduction. The chain is NADPH-dependent aldehyde reductase 1, chloroplastic from Arabidopsis thaliana (Mouse-ear cress).